The sequence spans 318 residues: Porphobilinogen deaminase (318 aa).

S-(dipyrrolylmethanemethyl)cysteine is present on Cys248.

It belongs to the HMBS family. As to quaternary structure, monomer. Dipyrromethane is required as a cofactor.

It carries out the reaction 4 porphobilinogen + H2O = hydroxymethylbilane + 4 NH4(+). Its pathway is porphyrin-containing compound metabolism; protoporphyrin-IX biosynthesis; coproporphyrinogen-III from 5-aminolevulinate: step 2/4. In terms of biological role, tetrapolymerization of the monopyrrole PBG into the hydroxymethylbilane pre-uroporphyrinogen in several discrete steps. The protein is Porphobilinogen deaminase of Caulobacter sp. (strain K31).